A 533-amino-acid polypeptide reads, in one-letter code: RNA end formation protein 2 (533 aa).

3 disordered regions span residues 187 to 254 (SNST…SSMK), 260 to 279 (LFNKNEAKSTESLPTSSKKK), and 321 to 344 (SSSTSGSSTTTVATPASSEEPLKK). Residues 206 to 222 (KIKDSEKEKEKEKDKSK) show a composition bias toward basic and acidic residues. A compositionally biased stretch (low complexity) spans 242 to 252 (SSPSPTASTSS). Positions 321-338 (SSSTSGSSTTTVATPASS) are enriched in low complexity.

Interacts with FIR1. Component of the cleavage and polyadenylation factor (CPF) complex, which is composed of PTI1, SYC1, SSU72, GLC7, MPE1, REF2, PFS2, PTA1, YSH1/BRR5, SWD2, CFT2/YDH1, YTH1, CFT1/YHH1, FIP1 and PAP1. Component of the APT complex, which is a subcomplex of CPF, and is composed of PTI1, SYC1, SSU72, GLC7, REF2, PTA1 and SWD2.

The protein resides in the nucleus. Functionally, RNA-binding component of the cleavage and polyadenylation factor (CPF) complex, which plays a key role in polyadenylation-dependent pre-mRNA 3'-end formation and cooperates with cleavage factors including the CFIA complex and NAB4/CFIB. Negative regulator of poly(A) synthesis. Component of the APT complex, which may be involved in polyadenylation-independent transcript 3'-end formation. REF2 is required for 3'-end formation of snoRNAs. The sequence is that of RNA end formation protein 2 (REF2) from Saccharomyces cerevisiae (strain ATCC 204508 / S288c) (Baker's yeast).